Consider the following 391-residue polypeptide: RNA-binding motif protein, X chromosome (391 aa).

At Met1 the chain carries N-acetylmethionine; in Heterogeneous nuclear ribonucleoprotein G; alternate. An N-acetylvaline; in Heterogeneous nuclear ribonucleoprotein G, N-terminally processed modification is found at Val2. The RRM domain maps to 8–86 (GKLFIGGLNT…KAIKVEQATK (79 aa)). A Glycyl lysine isopeptide (Lys-Gly) (interchain with G-Cter in SUMO2) cross-link involves residue Lys22. Lys30 is modified (N6-acetyllysine). Positions 61–80 (DAKDAARDMNGKSLDGKAIK) are enriched in basic and acidic residues. The segment at 61–391 (DAKDAARDMN…SDRGGGRSRY (331 aa)) is disordered. Residues Lys80 and Lys86 each participate in a glycyl lysine isopeptide (Lys-Gly) (interchain with G-Cter in SUMO2) cross-link. Phosphoserine occurs at positions 88 and 91. A compositionally biased stretch (gly residues) spans 109 to 120 (LRGGRGGSGGTR). Arg125, Arg144, and Arg164 each carry omega-N-methylarginine. A compositionally biased stretch (pro residues) spans 151 to 164 (RGPPPRSGGPPPKR). Ser165 carries the post-translational modification Phosphoserine. At Arg172 the chain carries Omega-N-methylarginine. Ser174 is subject to Phosphoserine. The necessary for the association to nascent RNAPII transcripts and nuclear localization stretch occupies residues 186-236 (GRDSYGGPPRREPLPSRRDVYLSPRDDGYSTKDSYSSRDYPSSRDTRDYAP). Basic and acidic residues-rich tracts occupy residues 194-215 (PRRE…DGYS) and 241-274 (YTYR…DYSD). Phosphoserine is present on residues Ser261, Ser328, Ser329, Ser330, and Ser332. Low complexity predominate over residues 323-337 (SRDSYSSSRSDLYSS). Positions 333–391 (DLYSSGRDRVGRQERGLPPSMERGYPPPRDSYSSSSRGAPRGGGRGGSRSDRGGGRSRY) are necessary for RNA-binding. Basic and acidic residues predominate over residues 338–347 (GRDRVGRQER). A Phosphoserine modification is found at Ser352. Low complexity predominate over residues 362-371 (DSYSSSSRGA). The segment covering 380–391 (SRSDRGGGRSRY) has biased composition (basic and acidic residues).

Homomultimer. Found in the supraspliceosome complex. Identified in the spliceosome C complex. Forms a complex with ILF2, ILF3, YLPM1, KHDRBS1, NCOA5 and PPP1CA. Interacts with CLK2, KHDRBS2, KHDRBS3, SAFB/SAFB1, TRA2B and YTHDC1. Interacts with ERAP1; the interaction is RNA-independent. Interacts with PPIA/CYPA. In terms of processing, O-glycosylated. Arg-185 is dimethylated, probably to asymmetric dimethylarginine.

The protein localises to the nucleus. Its function is as follows. RNA-binding protein that plays several role in the regulation of pre- and post-transcriptional processes. Implicated in tissue-specific regulation of gene transcription and alternative splicing of several pre-mRNAs. Binds to and stimulates transcription from the tumor suppressor TXNIP gene promoter; may thus be involved in tumor suppression. When associated with SAFB, binds to and stimulates transcription from the SREBF1 promoter. Associates with nascent mRNAs transcribed by RNA polymerase II. Component of the supraspliceosome complex that regulates pre-mRNA alternative splice site selection. Can either activate or suppress exon inclusion; acts additively with TRA2B to promote exon 7 inclusion of the survival motor neuron SMN2. Represses the splicing of MAPT/Tau exon 10. Binds preferentially to single-stranded 5'-CC[A/C]-rich RNA sequence motifs localized in a single-stranded conformation; probably binds RNA as a homodimer. Binds non-specifically to pre-mRNAs. Also plays a role in the cytoplasmic TNFR1 trafficking pathways; promotes both the IL-1-beta-mediated inducible proteolytic cleavage of TNFR1 ectodomains and the release of TNFR1 exosome-like vesicles to the extracellular compartment. This is RNA-binding motif protein, X chromosome (RBMX) from Pan troglodytes (Chimpanzee).